The sequence spans 340 residues: Alcohol dehydrogenase (340 aa).

Residues Cys40 and His63 each coordinate Zn(2+).

Belongs to the zinc-containing alcohol dehydrogenase family. Zn(2+) serves as cofactor.

The catalysed reaction is a primary alcohol + NAD(+) = an aldehyde + NADH + H(+). It carries out the reaction a secondary alcohol + NAD(+) = a ketone + NADH + H(+). The polypeptide is Alcohol dehydrogenase (adhA) (Rhizobium meliloti (strain 1021) (Ensifer meliloti)).